We begin with the raw amino-acid sequence, 393 residues long: Arginine biosynthesis bifunctional protein ArgJ (393 aa).

The substrate site is built by Thr142, Lys168, Thr179, Glu265, Asn388, and Ser393. Thr179 (nucleophile) is an active-site residue.

It belongs to the ArgJ family. In terms of assembly, heterotetramer of two alpha and two beta chains.

It is found in the cytoplasm. The catalysed reaction is N(2)-acetyl-L-ornithine + L-glutamate = N-acetyl-L-glutamate + L-ornithine. The enzyme catalyses L-glutamate + acetyl-CoA = N-acetyl-L-glutamate + CoA + H(+). It functions in the pathway amino-acid biosynthesis; L-arginine biosynthesis; L-ornithine and N-acetyl-L-glutamate from L-glutamate and N(2)-acetyl-L-ornithine (cyclic): step 1/1. It participates in amino-acid biosynthesis; L-arginine biosynthesis; N(2)-acetyl-L-ornithine from L-glutamate: step 1/4. Catalyzes two activities which are involved in the cyclic version of arginine biosynthesis: the synthesis of N-acetylglutamate from glutamate and acetyl-CoA as the acetyl donor, and of ornithine by transacetylation between N(2)-acetylornithine and glutamate. The sequence is that of Arginine biosynthesis bifunctional protein ArgJ from Desulfotalea psychrophila (strain LSv54 / DSM 12343).